We begin with the raw amino-acid sequence, 81 residues long: Cytotoxin 2 (81 aa).

The N-terminal stretch at 1-21 (MKTLLLTLVVVTIVCLDLGYT) is a signal peptide. 4 cysteine pairs are disulfide-bonded: Cys24-Cys42, Cys35-Cys59, Cys63-Cys74, and Cys75-Cys80.

Belongs to the three-finger toxin family. Short-chain subfamily. Type IA cytotoxin sub-subfamily. In terms of assembly, monomer in solution; Homodimer and oligomer in the presence of negatively charged lipids forming a pore with a size ranging between 20 and 30 Angstroms. In terms of tissue distribution, expressed by the venom gland.

Its subcellular location is the secreted. The protein localises to the target cell membrane. Basic protein that binds to cell membrane and depolarizes cardiomyocytes. It also shows lytic activities, but 2-fold less important than that of CTX-A4. It binds to the integrin alpha-V/beta-3 (ITGAV/ITGB3) with a moderate affinity. It may interact with sulfatides in the cell membrane which induces pore formation and cell internalization and is responsible for cytotoxicity in cardiomyocytes. It may also target the mitochondrial membrane and induce mitochondrial swelling and fragmentation. The polypeptide is Cytotoxin 2 (Naja atra (Chinese cobra)).